A 508-amino-acid polypeptide reads, in one-letter code: Histidine ammonia-lyase (508 aa).

The 5-imidazolinone (Ala-Gly) cross-link spans 139 to 141 (ASG). S140 carries the post-translational modification 2,3-didehydroalanine (Ser).

This sequence belongs to the PAL/histidase family. Post-translationally, contains an active site 4-methylidene-imidazol-5-one (MIO), which is formed autocatalytically by cyclization and dehydration of residues Ala-Ser-Gly.

Its subcellular location is the cytoplasm. The catalysed reaction is L-histidine = trans-urocanate + NH4(+). It participates in amino-acid degradation; L-histidine degradation into L-glutamate; N-formimidoyl-L-glutamate from L-histidine: step 1/3. In Acidiphilium cryptum (strain JF-5), this protein is Histidine ammonia-lyase.